Here is a 184-residue protein sequence, read N- to C-terminus: Large ribosomal subunit protein uL5 (184 aa).

This sequence belongs to the universal ribosomal protein uL5 family. In terms of assembly, part of the 50S ribosomal subunit; part of the 5S rRNA/L5/L18/L25 subcomplex. Contacts the 5S rRNA and the P site tRNA. Forms a bridge to the 30S subunit in the 70S ribosome.

Functionally, this is one of the proteins that bind and probably mediate the attachment of the 5S RNA into the large ribosomal subunit, where it forms part of the central protuberance. In the 70S ribosome it contacts protein S13 of the 30S subunit (bridge B1b), connecting the 2 subunits; this bridge is implicated in subunit movement. Contacts the P site tRNA; the 5S rRNA and some of its associated proteins might help stabilize positioning of ribosome-bound tRNAs. The sequence is that of Large ribosomal subunit protein uL5 from Ureaplasma urealyticum serovar 10 (strain ATCC 33699 / Western).